The primary structure comprises 342 residues: Renalase (342 aa).

The signal sequence occupies residues Met-1–Ala-17. FAD contacts are provided by residues Thr-12, Arg-42, and Gln-61–Tyr-62.

This sequence belongs to the renalase family. The cofactor is FAD. As to expression, expressed predominantly in kidney and testis with lower levels in liver, heart and embryo and weak expression in brain and skeletal muscle.

The protein resides in the secreted. The enzyme catalyses 1,2-dihydro-beta-NAD + O2 + H(+) = H2O2 + NAD(+). The catalysed reaction is 1,2-dihydro-beta-NADP + O2 + H(+) = H2O2 + NADP(+). It catalyses the reaction 1,6-dihydro-beta-NADP + O2 + H(+) = H2O2 + NADP(+). It carries out the reaction 1,6-dihydro-beta-NAD + O2 + H(+) = H2O2 + NAD(+). Catalyzes the oxidation of the less abundant 1,2-dihydro-beta-NAD(P) and 1,6-dihydro-beta-NAD(P) to form beta-NAD(P)(+). The enzyme hormone is secreted by the kidney, and circulates in blood and modulates cardiac function and systemic blood pressure. Lowers blood pressure in vivo by decreasing cardiac contractility and heart rate and preventing a compensatory increase in peripheral vascular tone, suggesting a causal link to the increased plasma catecholamine and heightened cardiovascular risk. High concentrations of catecholamines activate plasma renalase and promotes its secretion and synthesis. In Mus musculus (Mouse), this protein is Renalase.